A 94-amino-acid chain; its full sequence is uncharacterized protein (94 aa).

The tract at residues 1 to 22 (MATLQQAQQQNNQLTQQNNQLT) is disordered. Residues 1-77 (MATLQQAQQQ…NRLHSENHRL (77 aa)) are a coiled coil.

This is an uncharacterized protein from Acheta domesticus (House cricket).